The sequence spans 434 residues: Histidinol dehydrogenase (434 aa).

NAD(+) contacts are provided by Y130, Q188, and N211. Substrate-binding residues include S237, Q259, and H262. Positions 259 and 262 each coordinate Zn(2+). Catalysis depends on proton acceptor residues E326 and H327. 4 residues coordinate substrate: H327, D360, E414, and H419. A Zn(2+)-binding site is contributed by D360. H419 provides a ligand contact to Zn(2+).

The protein belongs to the histidinol dehydrogenase family. As to quaternary structure, homodimer. The cofactor is Zn(2+).

It carries out the reaction L-histidinol + 2 NAD(+) + H2O = L-histidine + 2 NADH + 3 H(+). It participates in amino-acid biosynthesis; L-histidine biosynthesis; L-histidine from 5-phospho-alpha-D-ribose 1-diphosphate: step 9/9. Its function is as follows. Catalyzes the sequential NAD-dependent oxidations of L-histidinol to L-histidinaldehyde and then to L-histidine. The chain is Histidinol dehydrogenase from Shigella dysenteriae serotype 1 (strain Sd197).